The primary structure comprises 542 residues: MLFRRLLTTKVGYHTPNYVNRRLILSVLKSTATRREAKDYLTKYGDPAVAYHCVLYLRGTKTFSAGLINDFAIMLGRLRLLGIRPLVVLSPSKHVMTESEILRETFYKHGLQSIPINEPMASGTRETILQNGASYNSIIPIIMPFVYHQQRAKRMLAEDEVAFMRELVAYMPCRIDKFFIINRYGGIPSSERHDNSHVFVNLSQEYGSLAEVLKQQITDLRHEMDDGLLAERRATDGSYKEFQYTTLTESLTDLELMSAVLSLLLPSSTGLITSMHSAVTNSRYNPLLYNVLTDRSLVSSSLPSFKRDPISDNAWYELPACGAKIGTQRANPIFSTTVLKQGVDIKLYDYSTLTKENSVGFHELLSTAGSAQLPAHKRVNLTKLKGIIEHSFDRNLDMSHYLKRINGKIASIIVIGDYEGIAILTYEGPEKRPFAYLDKFAVLPHLRGSLCISDVIFNLMFKKFGDELVWRSRRENVVNNWYFQRSVGVLDLSIDIGHGPKKDNIFKLFYYGGKKGTQFYDFDRLREYITYVRDIEPSWSRK.

The transit peptide at 1–14 directs the protein to the mitochondrion; the sequence is MLFRRLLTTKVGYH. The region spanning 368–534 is the N-acetyltransferase domain; that stretch reads AGSAQLPAHK…LREYITYVRD (167 aa).

It belongs to the acetyltransferase family.

The protein localises to the mitochondrion. The catalysed reaction is L-glutamate + acetyl-CoA = N-acetyl-L-glutamate + CoA + H(+). It functions in the pathway amino-acid biosynthesis; L-arginine biosynthesis; N(2)-acetyl-L-ornithine from L-glutamate: step 1/4. N-acetylglutamate synthase involved in arginine biosynthesis. In Eremothecium gossypii (strain ATCC 10895 / CBS 109.51 / FGSC 9923 / NRRL Y-1056) (Yeast), this protein is Amino-acid acetyltransferase, mitochondrial (ARG2).